The following is a 283-amino-acid chain: Protein FAM170A (283 aa).

2 disordered regions span residues 1–54 (MKRR…RSQH) and 123–171 (GTPP…AKTP). Over residues 127 to 138 (SDVSTRNLLSDS) the composition is skewed to polar residues. Residues 142 to 153 (GEEKEHEERTES) are compositionally biased toward basic and acidic residues. The residue at position 170 (threonine 170) is a Phosphothreonine. The C2H2-type; degenerate zinc-finger motif lies at 181-205 (FRCMACCRVFTTMEALQEHVQFGIR). The tract at residues 223–283 (NMESESTQDE…VFHSPKDRNS (61 aa)) is disordered. Over residues 228 to 246 (STQDEQEEENGNEKEEEEK) the composition is skewed to acidic residues. At serine 268 the chain carries Phosphoserine.

This sequence belongs to the FAM170 family.

It localises to the nucleus. In terms of biological role, acts as a nuclear transcription factor that positively regulates the expression of heat shock genes. Binds to heat shock promoter elements (HSE). The protein is Protein FAM170A (FAM170A) of Macaca fascicularis (Crab-eating macaque).